The chain runs to 280 residues: Succinate dehydrogenase [ubiquinone] iron-sulfur subunit, mitochondrial (280 aa).

A mitochondrion-targeting transit peptide spans 1-25 (MAAVCFSLSRCCSAVHRPAVTAVRF). Residues 39 to 129 (KKFQIYRWDP…TSKVTKIYPL (91 aa)) enclose the 2Fe-2S ferredoxin-type domain. [2Fe-2S] cluster is bound by residues cysteine 92, cysteine 97, cysteine 100, and cysteine 112. The 4Fe-4S ferredoxin-type domain occupies 175–205 (DRQKLDGLYECILCACCSTSCPSYWWNADKY). [4Fe-4S] cluster contacts are provided by cysteine 185, cysteine 188, and cysteine 191. Residue cysteine 195 coordinates [3Fe-4S] cluster. A ubiquinone is bound at residue tryptophan 200. The [3Fe-4S] cluster site is built by cysteine 242 and cysteine 248. Cysteine 252 lines the [4Fe-4S] cluster pocket.

It belongs to the succinate dehydrogenase/fumarate reductase iron-sulfur protein family. As to quaternary structure, component of complex II composed of four subunits: the flavoprotein (FP) sdha, iron-sulfur protein (IP) sdhb, and a cytochrome b composed of sdhc and sdhd. It depends on [2Fe-2S] cluster as a cofactor. [3Fe-4S] cluster serves as cofactor. [4Fe-4S] cluster is required as a cofactor.

It localises to the mitochondrion inner membrane. The enzyme catalyses a quinone + succinate = fumarate + a quinol. The catalysed reaction is (R)-malate + a quinone = enol-oxaloacetate + a quinol. It carries out the reaction (S)-malate + a quinone = enol-oxaloacetate + a quinol. The protein operates within carbohydrate metabolism; tricarboxylic acid cycle; fumarate from succinate (eukaryal route): step 1/1. Enol-oxaloacetate inhibits the succinate dehydrogenase activity. Iron-sulfur protein (IP) subunit of the succinate dehydrogenase complex (mitochondrial respiratory chain complex II), responsible for transferring electrons from succinate to ubiquinone (coenzyme Q). SDH also oxidizes malate to the non-canonical enol form of oxaloacetate, enol-oxaloacetate. Enol-oxaloacetate, which is a potent inhibitor of the succinate dehydrogenase activity, is further isomerized into keto-oxaloacetate. The sequence is that of Succinate dehydrogenase [ubiquinone] iron-sulfur subunit, mitochondrial (sdhb) from Danio rerio (Zebrafish).